Reading from the N-terminus, the 305-residue chain is Deoxyribonuclease gamma (305 aa).

An N-terminal signal peptide occupies residues 1–20; that stretch reads MSRELAPLLLLLLSIHSALA. Positions 35 to 51 match the Bipartite nuclear localization signal motif; it reads KQEDKNAMDVIVKVIKR. Catalysis depends on residues Glu-100 and His-155. Residues Cys-194 and Cys-231 are joined by a disulfide bond. Residues 284–305 are not required for free DNA-nuclease activity but required for activity towards liposome-coated DNA; the sequence is SRAFTNSKKSVTLRKKTKSKRS. The Nuclear localization signal motif lies at 296-304; sequence LRKKTKSKR.

This sequence belongs to the DNase I family. Requires Ca(2+) as cofactor. The cofactor is Mg(2+). Post-translationally, poly-ADP-ribosylated by PARP1. ADP-ribosylation negatively regulates enzymatic activity during apoptosis. As to expression, liver and spleen.

Its subcellular location is the nucleus. It localises to the endoplasmic reticulum. It is found in the secreted. With respect to regulation, inhibited by zinc. Its function is as follows. Has DNA hydrolytic activity. Is capable of both single- and double-stranded DNA cleavage, producing DNA fragments with 3'-OH ends. Can cleave chromatin to nucleosomal units and cleaves nucleosomal and liposome-coated DNA. Acts in internucleosomal DNA fragmentation (INDF) during apoptosis and necrosis. The role in apoptosis includes myogenic and neuronal differentiation, and BCR-mediated clonal deletion of self-reactive B cells. Is active on chromatin in apoptotic cell-derived membrane-coated microparticles and thus suppresses anti-DNA autoimmunity. Together with DNASE1, plays a key role in degrading neutrophil extracellular traps (NETs). NETs are mainly composed of DNA fibers and are released by neutrophils to bind pathogens during inflammation. Degradation of intravascular NETs by DNASE1 and DNASE1L3 is required to prevent formation of clots that obstruct blood vessels and cause organ damage following inflammation. In Homo sapiens (Human), this protein is Deoxyribonuclease gamma.